The sequence spans 144 residues: MAKKIVGYVKLQIPAGKANPSPPVGPALGQRGLNIMQFCKEFNAATQAMEPGMPVPVVITAYADRTFSFITKTPPNTYFLLKAAKVQKGSPTVGKSAAVGRVTMSQLREIAETKFQDMNANDIDGAVRMLAGSAKSMGLTVVEG.

Belongs to the universal ribosomal protein uL11 family. Part of the ribosomal stalk of the 50S ribosomal subunit. Interacts with L10 and the large rRNA to form the base of the stalk. L10 forms an elongated spine to which L12 dimers bind in a sequential fashion forming a multimeric L10(L12)X complex. Post-translationally, one or more lysine residues are methylated.

Its function is as follows. Forms part of the ribosomal stalk which helps the ribosome interact with GTP-bound translation factors. The protein is Large ribosomal subunit protein uL11 of Granulibacter bethesdensis (strain ATCC BAA-1260 / CGDNIH1).